Consider the following 630-residue polypeptide: Forkhead box protein O (630 aa).

A disordered region spans residues 1–45 (MDGFVQEWSNLPRSDNGLHMDQLVGELPTDGGFEPQTRARSNTWP). A Phosphothreonine; by PKB/AKT1 modification is found at threonine 43. The segment at residues 92 to 198 (WGNLSYADLI…ETSRYEKRRG (107 aa)) is a DNA-binding region (fork-head). A Phosphoserine; by PKB/AKT1 modification is found at serine 187. The segment at 214 to 260 (GLNDATPSPSSSVSEGLDHFPESPLHSGGFQLSPDFRQRASSNASSC) is disordered. Residues 218 to 227 (ATPSPSSSVS) show a composition bias toward polar residues. Serine 255 carries the post-translational modification Phosphoserine; by PKB/AKT1. A phosphoserine mark is found at serine 258, serine 259, and serine 264. Disordered regions lie at residues 318–379 (SAAS…QQQQ) and 403–432 (TRDG…SLNT). Composition is skewed to low complexity over residues 332-350 (QQQQ…QLPQ) and 367-379 (QPQA…QQQQ). Composition is skewed to polar residues over residues 408–417 (SPNSVTTTMS) and 423–432 (SEPSSDSLNT).

As to quaternary structure, interacts with melt.

It is found in the cytoplasm. Its subcellular location is the nucleus. Transcription factor involved in the regulation of the insulin signaling pathway. Consistently activates both the downstream target Thor\d4EBP and the feedback control target InR. Involved in negative regulation of the cell cycle, modulating cell growth and proliferation. In response to cellular stresses, such as nutrient deprivation or increased levels of reactive oxygen species, foxo is activated and inhibits growth through the action of target genes such as Thor. Foxo activated in the adult fat body can regulate lifespan in adults; an insulin peptide itself may function as one secondary messenger of insulin-regulated aging. Also regulates Lip4, homolog of human acid lipases, thereby acting as a key modulator of lipid metabolism by insulin signaling and integrates insulin responses to glucose and lipid homeostasis. This is Forkhead box protein O from Drosophila grimshawi (Hawaiian fruit fly).